A 177-amino-acid chain; its full sequence is Large ribosomal subunit protein uL6 (177 aa).

The protein belongs to the universal ribosomal protein uL6 family. Part of the 50S ribosomal subunit.

Functionally, this protein binds to the 23S rRNA, and is important in its secondary structure. It is located near the subunit interface in the base of the L7/L12 stalk, and near the tRNA binding site of the peptidyltransferase center. In Pseudomonas putida (strain W619), this protein is Large ribosomal subunit protein uL6.